The following is a 382-amino-acid chain: Methylthioribose-1-phosphate isomerase (382 aa).

Catalysis depends on Asp-261, which acts as the Proton donor.

Belongs to the eIF-2B alpha/beta/delta subunits family. MtnA subfamily.

It localises to the cytoplasm. The protein localises to the nucleus. It carries out the reaction 5-(methylsulfanyl)-alpha-D-ribose 1-phosphate = 5-(methylsulfanyl)-D-ribulose 1-phosphate. It functions in the pathway amino-acid biosynthesis; L-methionine biosynthesis via salvage pathway; L-methionine from S-methyl-5-thio-alpha-D-ribose 1-phosphate: step 1/6. In terms of biological role, catalyzes the interconversion of methylthioribose-1-phosphate (MTR-1-P) into methylthioribulose-1-phosphate (MTRu-1-P). In Ricinus communis (Castor bean), this protein is Methylthioribose-1-phosphate isomerase.